The chain runs to 249 residues: Tumor necrosis factor ligand superfamily member 12 (249 aa).

Residues 1 to 21 (MAARRSQRRRGRRGEPGTALL) are Cytoplasmic-facing. The chain crosses the membrane as a helical; Signal-anchor for type II membrane protein span at residues 22 to 42 (VPLALGLGLALACLGLLLAVV). Residues 43-249 (SLGSRASLSA…LTYFGLFQVH (207 aa)) lie on the Extracellular side of the membrane. Residues 55–85 (PAQEELVAEEDQDPSELNPQTEESQDPAPFL) form a disordered region. Acidic residues predominate over residues 56-68 (AQEELVAEEDQDP). In terms of domain architecture, THD spans 107–248 (IAAHYEVHPR…FLTYFGLFQV (142 aa)). N139 carries N-linked (GlcNAc...) asparagine glycosylation. An intrachain disulfide couples C191 to C210.

This sequence belongs to the tumor necrosis factor family. Homotrimer. Interacts with the angiogenic factor AGGF1/VG5Q. The soluble form derives from the membrane form by proteolytic processing. In terms of tissue distribution, highly expressed in adult heart, pancreas, skeletal muscle, brain, colon, small intestine, lung, ovary, prostate, spleen, lymph node, appendix and peripheral blood lymphocytes. Low expression in kidney, testis, liver, placenta, thymus and bone marrow. Also detected in fetal kidney, liver, lung and brain.

The protein localises to the cell membrane. It is found in the secreted. Its function is as follows. Binds to FN14 and possibly also to TNRFSF12/APO3. Weak inducer of apoptosis in some cell types. Mediates NF-kappa-B activation. Promotes angiogenesis and the proliferation of endothelial cells. Also involved in induction of inflammatory cytokines. Promotes IL8 secretion. This chain is Tumor necrosis factor ligand superfamily member 12 (TNFSF12), found in Homo sapiens (Human).